A 458-amino-acid chain; its full sequence is UDP-N-acetylmuramoylalanine--D-glutamate ligase (458 aa).

124–130 (GSDGKTT) is a binding site for ATP.

The protein belongs to the MurCDEF family.

The protein resides in the cytoplasm. It carries out the reaction UDP-N-acetyl-alpha-D-muramoyl-L-alanine + D-glutamate + ATP = UDP-N-acetyl-alpha-D-muramoyl-L-alanyl-D-glutamate + ADP + phosphate + H(+). It functions in the pathway cell wall biogenesis; peptidoglycan biosynthesis. Its function is as follows. Cell wall formation. Catalyzes the addition of glutamate to the nucleotide precursor UDP-N-acetylmuramoyl-L-alanine (UMA). The polypeptide is UDP-N-acetylmuramoylalanine--D-glutamate ligase (Clostridium botulinum (strain Kyoto / Type A2)).